Here is a 363-residue protein sequence, read N- to C-terminus: Flagellar P-ring protein (363 aa).

An N-terminal signal peptide occupies residues 1 to 20; it reads MKLKLILAVAMLAFSLPSQA.

The protein belongs to the FlgI family. As to quaternary structure, the basal body constitutes a major portion of the flagellar organelle and consists of four rings (L,P,S, and M) mounted on a central rod.

Its subcellular location is the periplasm. The protein resides in the bacterial flagellum basal body. Assembles around the rod to form the L-ring and probably protects the motor/basal body from shearing forces during rotation. This chain is Flagellar P-ring protein, found in Shewanella sp. (strain MR-7).